We begin with the raw amino-acid sequence, 660 residues long: Macrolide export ATP-binding/permease protein MacB (660 aa).

Residues 10 to 248 (LVLENIVRKF…AKGQALQGKQ (239 aa)) form the ABC transporter domain. Position 46–53 (46–53 (GASGSGKS)) interacts with ATP. The next 4 membrane-spanning stretches (helical) occupy residues 285–305 (FLTM…VALG), 532–552 (ILTL…GIGV), 593–613 (IIGG…FVLF), and 625–645 (SIII…FSPA).

The protein belongs to the ABC transporter superfamily. Macrolide exporter (TC 3.A.1.122) family. Homodimer.

The protein localises to the cell inner membrane. Non-canonical ABC transporter that contains transmembrane domains (TMD), which form a pore in the inner membrane, and an ATP-binding domain (NBD), which is responsible for energy generation. Confers resistance against macrolides. In Bartonella quintana (strain Toulouse) (Rochalimaea quintana), this protein is Macrolide export ATP-binding/permease protein MacB.